Reading from the N-terminus, the 1822-residue chain is ADP-ribosylation factor guanine nucleotide-exchange factor sec72 (1822 aa).

2 disordered regions span residues 1–54 (MQDA…NGMD) and 66–126 (DAVV…RASL). At serine 44 the chain carries Phosphoserine. The segment covering 72-84 (DINTEDSSLSPAK) has biased composition (polar residues). A compositionally biased stretch (basic and acidic residues) spans 85–110 (QENEKSPEGIEQKYQEEDLKDDKKSN). Residues serine 122 and serine 125 each carry the phosphoserine modification. Positions 547-551 (NYDCD) match the HUS box motif. Residue threonine 597 is modified to Phosphothreonine. A Phosphoserine modification is found at serine 653. Residue threonine 654 is modified to Phosphothreonine. Position 669 is a phosphoserine (serine 669). Residues 701-889 (QFESNKQRKK…GFVYDDILKN (189 aa)) enclose the SEC7 domain. The tract at residues 898–1106 (ELAAIAPLMN…NARVRRKNVN (209 aa)) is HDS1 domain. Serine 1110 is subject to Phosphoserine. Disordered stretches follow at residues 1111–1131 (NSIR…SLSK) and 1584–1610 (ENEN…TSSI). Composition is skewed to low complexity over residues 1117-1130 (SGST…RSLS) and 1597-1610 (SLPE…TSSI). Phosphoserine occurs at positions 1606 and 1609.

It localises to the cytoplasm. The protein resides in the golgi apparatus. The protein localises to the trans-Golgi network. Its subcellular location is the cytoplasmic vesicle. It is found in the COPI-coated vesicle membrane. It localises to the COPII-coated vesicle membrane. Its function is as follows. Guanine exchange factor that acts as an activator of arf1 at the trans-Golgi net-work and is thus involved in vesicular budding and traffic between compartments of the Golgi apparatus. Activation of Arf (ADP-ribosylation factor) GTPases is essential for vesicle formation via recruitment of cargo adapters and coat proteins necessary for Golgi trafficking. Involved in the resistance to tamoxifen (TAM), an anticancer drug used to treat estrogen receptor (ER)-positive breast cancer. This Schizosaccharomyces pombe (strain 972 / ATCC 24843) (Fission yeast) protein is ADP-ribosylation factor guanine nucleotide-exchange factor sec72.